A 521-amino-acid chain; its full sequence is Ankyrin repeat domain-containing protein 34B (521 aa).

4 ANK repeats span residues 9-38, 42-79, 83-113, and 117-146; these read TESN…YINE, RGET…DPNI, FGKT…DPSL, and TGFS…AKGK. Residues 161 to 188 form a disordered region; the sequence is QTTRQYLNVPPSPGIEGNNSPSPCTSPS. Polar residues predominate over residues 177-188; the sequence is GNNSPSPCTSPS.

It belongs to the ANKRD34 family.

Its subcellular location is the cytoplasm. The protein localises to the nucleus. The polypeptide is Ankyrin repeat domain-containing protein 34B (ankrd34b) (Xenopus laevis (African clawed frog)).